We begin with the raw amino-acid sequence, 398 residues long: 1-deoxy-D-xylulose 5-phosphate reductoisomerase (398 aa).

Residues Thr-14, Gly-15, Ser-16, Ile-17, Gln-42, and Asn-128 each contribute to the NADPH site. Lys-129 contributes to the 1-deoxy-D-xylulose 5-phosphate binding site. Glu-130 serves as a coordination point for NADPH. Asp-154 serves as a coordination point for Mn(2+). 4 residues coordinate 1-deoxy-D-xylulose 5-phosphate: Ser-155, Glu-156, Ser-185, and His-208. Glu-156 contributes to the Mn(2+) binding site. Gly-214 provides a ligand contact to NADPH. Residues Ser-221, Asn-226, Lys-227, and Glu-230 each contribute to the 1-deoxy-D-xylulose 5-phosphate site. Glu-230 contributes to the Mn(2+) binding site.

It belongs to the DXR family. It depends on Mg(2+) as a cofactor. Requires Mn(2+) as cofactor.

It catalyses the reaction 2-C-methyl-D-erythritol 4-phosphate + NADP(+) = 1-deoxy-D-xylulose 5-phosphate + NADPH + H(+). The protein operates within isoprenoid biosynthesis; isopentenyl diphosphate biosynthesis via DXP pathway; isopentenyl diphosphate from 1-deoxy-D-xylulose 5-phosphate: step 1/6. In terms of biological role, catalyzes the NADPH-dependent rearrangement and reduction of 1-deoxy-D-xylulose-5-phosphate (DXP) to 2-C-methyl-D-erythritol 4-phosphate (MEP). This Dechloromonas aromatica (strain RCB) protein is 1-deoxy-D-xylulose 5-phosphate reductoisomerase.